Here is a 308-residue protein sequence, read N- to C-terminus: Ribosomal protein uL3 glutamine methyltransferase (308 aa).

Belongs to the protein N5-glutamine methyltransferase family. PrmB subfamily.

The enzyme catalyses L-glutaminyl-[ribosomal protein uL3] + S-adenosyl-L-methionine = N(5)-methyl-L-glutaminyl-[ribosomal protein uL3] + S-adenosyl-L-homocysteine + H(+). In terms of biological role, methylates large ribosomal subunit protein uL3 on a specific glutamine residue. The chain is Ribosomal protein uL3 glutamine methyltransferase from Xanthomonas campestris pv. campestris (strain ATCC 33913 / DSM 3586 / NCPPB 528 / LMG 568 / P 25).